Consider the following 208-residue polypeptide: MGSGPRGAVSLLLLMLAPPSCPAADCPAPCSCAGTLVDCGRRGLTWASLPTSFPVHTTELVLTGNNLTALPSGLLDALPAVRTAHLGANPWRCDCRLVPLRAWLAGRPERAPYRDLRCVAPPAVRGRLLPYLAEDDVRAACAPGPLCWGALAAELALLGLGLLHALLLVLLLCRLRRLRARARARARAALRLSLTDPLVAEQDGTDES.

A signal peptide spans M1–C26. 2 cysteine pairs are disulfide-bonded: C26-C32 and C30-C39. Positions P27–V55 constitute an LRRNT domain. The Extracellular segment spans residues P27 to C147. One copy of the LRR repeat lies at L60–T83. The N-linked (GlcNAc...) asparagine glycan is linked to N66. Positions N89–P143 constitute an LRRCT domain. 2 disulfide bridges follow: C93–C118 and C95–C141. A helical transmembrane segment spans residues W148–L172. Over C173–S208 the chain is Cytoplasmic. S193 bears the Phosphoserine; by PKA mark. Position 195 is a phosphothreonine (T195).

Two GP-Ib beta are disulfide-linked to one GP-Ib alpha. GP-IX is complexed with the GP-Ib heterodimer via a non covalent linkage. Interacts with TRAF4.

Its subcellular location is the membrane. Functionally, gp-Ib, a surface membrane protein of platelets, participates in the formation of platelet plugs by binding to von Willebrand factor, which is already bound to the subendothelium. The polypeptide is Platelet glycoprotein Ib beta chain (GP1BB) (Papio cynocephalus (Yellow baboon)).